A 470-amino-acid chain; its full sequence is Chromosomal replication initiator protein DnaA (470 aa).

Residues 1-89 (MIESNHVVLW…YNVMVDKTSI (89 aa)) form a domain I, interacts with DnaA modulators region. The tract at residues 89 to 130 (IPNQTVNLEASNRSTAVTPKSIVGGNKAPSFLKAPAVQDLDP) is domain II. The domain III, AAA+ region stretch occupies residues 131–348 (HLNPNYNFEN…GIVIAIMARS (218 aa)). 4 residues coordinate ATP: G176, G178, K179, and T180. The tract at residues 349 to 470 (TIFNKEIDLD…EIESLLKKKA (122 aa)) is domain IV, binds dsDNA.

Belongs to the DnaA family. In terms of assembly, oligomerizes as a right-handed, spiral filament on DNA at oriC.

It localises to the cytoplasm. Plays an essential role in the initiation and regulation of chromosomal replication. ATP-DnaA binds to the origin of replication (oriC) to initiate formation of the DNA replication initiation complex once per cell cycle. Binds the DnaA box (a 9 base pair repeat at the origin) and separates the double-stranded (ds)DNA. Forms a right-handed helical filament on oriC DNA; dsDNA binds to the exterior of the filament while single-stranded (ss)DNA is stabiized in the filament's interior. The ATP-DnaA-oriC complex binds and stabilizes one strand of the AT-rich DNA unwinding element (DUE), permitting loading of DNA polymerase. After initiation quickly degrades to an ADP-DnaA complex that is not apt for DNA replication. Binds acidic phospholipids. In Bacteroides thetaiotaomicron (strain ATCC 29148 / DSM 2079 / JCM 5827 / CCUG 10774 / NCTC 10582 / VPI-5482 / E50), this protein is Chromosomal replication initiator protein DnaA.